The chain runs to 465 residues: MFINGEWINRKDIEVKNPYNNEIIGYIPSLSRNETKEAIKIAEEHKSTMKNLSPTIRYNILMKIASELSKNKRELAKLITIDVGKPIKQSIIEVDRTITTFKFSAFYSRELRGETIPFDDGMVITKREPVGLVGAITPFNFPLNLFAHKIAPAIAMGNSIVAHPSSKAPMITIELTKIIEKVLKSKKIPLGVFNLLTGEGHIVGDEIVKNNKINKLSFTGSVEVGESITKKAGFKKITLELGGNNPMIILKDANINKAVESCMSGKFLNSGQVCISVGRVLIEQEVADEFINKIVEKVKKLKIGNPLDEDTNISSLISLDSAERVEKLINKSIGQGGKLICGGKRENSIIYPTILEITADNILANIEIFAPVLPIIRVNDMNEALNQANNSNYGLHSGVFTQDINKALYFADNLEYGGVLINNSPTFRIDNMPFGGIKHSGLGREGIKYAIDEMSEIKTIIVNTK.

220–225 (GSVEVG) lines the NAD(+) pocket. Active-site residues include glutamate 240 and cysteine 274.

Belongs to the aldehyde dehydrogenase family. In terms of assembly, homotetramer.

It catalyses the reaction (S)-lactaldehyde + NAD(+) + H2O = (S)-lactate + NADH + 2 H(+). Its pathway is cofactor biosynthesis; coenzyme F420 biosynthesis. Functionally, involved in F420 biosynthesis through the oxidation of lactaldehyde to lactate. This Methanococcus aeolicus (strain ATCC BAA-1280 / DSM 17508 / OCM 812 / Nankai-3) protein is Lactaldehyde dehydrogenase.